Here is a 420-residue protein sequence, read N- to C-terminus: Gamma-glutamyl phosphate reductase (420 aa).

It belongs to the gamma-glutamyl phosphate reductase family.

It localises to the cytoplasm. It carries out the reaction L-glutamate 5-semialdehyde + phosphate + NADP(+) = L-glutamyl 5-phosphate + NADPH + H(+). Its pathway is amino-acid biosynthesis; L-proline biosynthesis; L-glutamate 5-semialdehyde from L-glutamate: step 2/2. Catalyzes the NADPH-dependent reduction of L-glutamate 5-phosphate into L-glutamate 5-semialdehyde and phosphate. The product spontaneously undergoes cyclization to form 1-pyrroline-5-carboxylate. This is Gamma-glutamyl phosphate reductase from Oenococcus oeni (strain ATCC BAA-331 / PSU-1).